We begin with the raw amino-acid sequence, 25 residues long: Flagellar filament outer layer protein (25 aa).

The flagellum consists of an outer layer composed of repeating units of FlaA around a core that contains several antigenically related polypeptides.

The protein resides in the periplasmic flagellum. It is found in the periplasm. Functionally, component of the outer layer of the flagella. This Treponema phagedenis protein is Flagellar filament outer layer protein (flaA).